The primary structure comprises 136 residues: Large ribosomal subunit protein uL16 (136 aa).

It belongs to the universal ribosomal protein uL16 family. In terms of assembly, part of the 50S ribosomal subunit.

Binds 23S rRNA and is also seen to make contacts with the A and possibly P site tRNAs. In Erwinia tasmaniensis (strain DSM 17950 / CFBP 7177 / CIP 109463 / NCPPB 4357 / Et1/99), this protein is Large ribosomal subunit protein uL16.